A 90-amino-acid chain; its full sequence is MLAKLFGLSKKQQSASVAKERLQIIVAHQRSELHPRSSKISSHLLAELKDEIIEVVKKYVALSEENIRDIDLKVEDSSKNSTIEVNIPFN.

It belongs to the MinE family.

In terms of biological role, prevents the cell division inhibition by proteins MinC and MinD at internal division sites while permitting inhibition at polar sites. This ensures cell division at the proper site by restricting the formation of a division septum at the midpoint of the long axis of the cell. This Francisella tularensis subsp. tularensis (strain FSC 198) protein is Cell division topological specificity factor.